A 308-amino-acid chain; its full sequence is Cytochrome b (308 aa).

4 helical membrane-spanning segments follow: residues 1 to 21 (FGLL…LLAA), 45 to 66 (WLIR…YLHI), 81 to 101 (WNIG…GYVL), and 146 to 166 (FFAL…VHLT). The heme b site is built by histidine 51 and histidine 65. Heme b-binding residues include histidine 150 and histidine 164. Histidine 169 provides a ligand contact to a ubiquinone. The next 3 membrane-spanning stretches (helical) occupy residues 194-214 (TKDM…ALFS), 256-276 (LGGV…PLLH), and 288-308 (LSQI…WVGS).

Belongs to the cytochrome b family. As to quaternary structure, the cytochrome bc1 complex contains 11 subunits: 3 respiratory subunits (MT-CYB, CYC1 and UQCRFS1), 2 core proteins (UQCRC1 and UQCRC2) and 6 low-molecular weight proteins (UQCRH/QCR6, UQCRB/QCR7, UQCRQ/QCR8, UQCR10/QCR9, UQCR11/QCR10 and a cleavage product of UQCRFS1). This cytochrome bc1 complex then forms a dimer. Heme b serves as cofactor.

The protein localises to the mitochondrion inner membrane. In terms of biological role, component of the ubiquinol-cytochrome c reductase complex (complex III or cytochrome b-c1 complex) that is part of the mitochondrial respiratory chain. The b-c1 complex mediates electron transfer from ubiquinol to cytochrome c. Contributes to the generation of a proton gradient across the mitochondrial membrane that is then used for ATP synthesis. This Pomatostomus temporalis (Grey-crowned babbler) protein is Cytochrome b (MT-CYB).